A 125-amino-acid chain; its full sequence is 14 kDa phosphohistidine phosphatase (125 aa).

A2 is subject to N-acetylalanine. Residue K21 participates in substrate binding. Catalysis depends on H53, which acts as the Proton acceptor. 94-96 (SMA) is a substrate binding site.

Belongs to the janus family. Monomer. As to expression, expressed abundantly in heart and skeletal muscle.

It is found in the cytoplasm. It catalyses the reaction N(pros)-phospho-L-histidyl-[protein] + H2O = L-histidyl-[protein] + phosphate. The catalysed reaction is N(tele)-phospho-L-histidyl-[protein] + H2O = L-histidyl-[protein] + phosphate. Exhibits phosphohistidine phosphatase activity. The polypeptide is 14 kDa phosphohistidine phosphatase (PHPT1) (Homo sapiens (Human)).